The primary structure comprises 590 residues: Histone-binding protein N1/N2 (590 aa).

Residues M1–I30 are disordered. One copy of the TPR 1 repeat lies at A36–Q69. A disordered region spans residues A102 to G328. Acidic residues predominate over residues M106–P120. 2 stretches are compositionally biased toward basic and acidic residues: residues L128 to E250 and A262 to E275. A compositionally biased stretch (acidic residues) spans E293 to V327. TPR repeat units lie at residues A357 to H390 and A399 to R432. Residues G492 to A590 form a disordered region. Positions G496–S525 are enriched in polar residues. The short motif at V531–T537 is the Nuclear localization signal element. Positions K536–Q553 are enriched in basic and acidic residues.

The protein belongs to the NASP family.

The protein resides in the nucleus. Its function is as follows. This protein is involved in nucleosome assembly. It is bound to H3 and H4 in the absence of DNA, but released from H3 and H4 in the presence of DNA. The chain is Histone-binding protein N1/N2 from Xenopus laevis (African clawed frog).